A 306-amino-acid polypeptide reads, in one-letter code: MESPTLLGLLLLLLGGPGTSLGEHRPDYDKEALLGGQDEVEEFSKLSPEEQQKRLKVIISRIDVDLDGFLTEAELSSWIQHSFKSYIIEDAKQQFQHYDKDGDGRVSWEEYNIQMYDRVIDFEEDTTLDDAEEESFRQLHLKDKKRFQKANKDGDSHLDFEEFAAFEHPEEADYMKEFVIQESLEEHDKDGDGFVSLQEFLGDYRRDPAAKEDPEWIVVEEDRFKNDYDKDKDGKLSPKELLTWVMPNNEGLAQEEAVHLLDEMDLDGDRRLSANEILENQDLFLNSEATDYGRQLHDKSFYHEEL.

The signal sequence occupies residues 1–22 (MESPTLLGLLLLLLGGPGTSLG). EF-hand domains follow at residues 50–85 (EQQKRLKVIISRIDVDLDGFLTEAELSSWIQHSFKS), 86–121 (YIIEDAKQQFQHYDKDGDGRVSWEEYNIQMYDRVID), 144–173 (KKRFQKANKDGDSHLDFEEFAAFEHPEEAD), 175–210 (MKEFVIQESLEEHDKDGDGFVSLQEFLGDYRRDPAA), 226–251 (NDYDKDKDGKLSPKELLTWVMPNNEG), and 252–287 (LAQEEAVHLLDEMDLDGDRRLSANEILENQDLFLNS). The Ca(2+) site is built by Asp99, Asp101, Asp103, Arg105, and Glu110. The Ca(2+) site is built by Asp188, Asp190, Asp192, Glu199, Asp229, Asp231, Asp233, Lys235, Glu240, Asp265, Asp267, Asp269, Arg271, and Glu276.

The protein belongs to the CREC family. In terms of assembly, may bind phospholipase A2, since the rat reticulocalbin-2 has been isolated on the phospholipase complex taipoxin columns. As to expression, expressed by the venom gland.

The protein localises to the secreted. In Crotalus adamanteus (Eastern diamondback rattlesnake), this protein is Reticulocalbin-2.